The sequence spans 173 residues: Bifunctional protein PyrR (173 aa).

The short motif at 94 to 106 (VILIDDVLYTGRT) is the PRPP-binding element.

The protein belongs to the purine/pyrimidine phosphoribosyltransferase family. PyrR subfamily. In terms of assembly, homodimer and homohexamer; in equilibrium.

It catalyses the reaction UMP + diphosphate = 5-phospho-alpha-D-ribose 1-diphosphate + uracil. Regulates transcriptional attenuation of the pyrimidine nucleotide (pyr) operon by binding in a uridine-dependent manner to specific sites on pyr mRNA. This disrupts an antiterminator hairpin in the RNA and favors formation of a downstream transcription terminator, leading to a reduced expression of downstream genes. Its function is as follows. Also displays a weak uracil phosphoribosyltransferase activity which is not physiologically significant. The chain is Bifunctional protein PyrR from Streptococcus gordonii (strain Challis / ATCC 35105 / BCRC 15272 / CH1 / DL1 / V288).